Consider the following 575-residue polypeptide: Proline--tRNA ligase (575 aa).

Belongs to the class-II aminoacyl-tRNA synthetase family. ProS type 1 subfamily. As to quaternary structure, homodimer.

It is found in the cytoplasm. The enzyme catalyses tRNA(Pro) + L-proline + ATP = L-prolyl-tRNA(Pro) + AMP + diphosphate. Functionally, catalyzes the attachment of proline to tRNA(Pro) in a two-step reaction: proline is first activated by ATP to form Pro-AMP and then transferred to the acceptor end of tRNA(Pro). As ProRS can inadvertently accommodate and process non-cognate amino acids such as alanine and cysteine, to avoid such errors it has two additional distinct editing activities against alanine. One activity is designated as 'pretransfer' editing and involves the tRNA(Pro)-independent hydrolysis of activated Ala-AMP. The other activity is designated 'posttransfer' editing and involves deacylation of mischarged Ala-tRNA(Pro). The misacylated Cys-tRNA(Pro) is not edited by ProRS. The sequence is that of Proline--tRNA ligase from Saccharophagus degradans (strain 2-40 / ATCC 43961 / DSM 17024).